The sequence spans 223 residues: Small ribosomal subunit protein uS3 (223 aa).

Residues Ile39–Lys115 form the KH type-2 domain.

It belongs to the universal ribosomal protein uS3 family. As to quaternary structure, part of the 30S ribosomal subunit. Forms a tight complex with proteins S10 and S14.

Its function is as follows. Binds the lower part of the 30S subunit head. Binds mRNA in the 70S ribosome, positioning it for translation. In Leuconostoc citreum (strain KM20), this protein is Small ribosomal subunit protein uS3.